Here is a 914-residue protein sequence, read N- to C-terminus: Protein translocase subunit SecA (914 aa).

ATP is bound by residues Gln-87, 105 to 109 (GEGKT), and Asp-508. Residues Cys-898, Cys-900, Cys-909, and His-910 each contribute to the Zn(2+) site.

Belongs to the SecA family. Monomer and homodimer. Part of the essential Sec protein translocation apparatus which comprises SecA, SecYEG and auxiliary proteins SecDF-YajC and YidC. Zn(2+) is required as a cofactor.

It is found in the cell inner membrane. The protein localises to the cytoplasm. The enzyme catalyses ATP + H2O + cellular proteinSide 1 = ADP + phosphate + cellular proteinSide 2.. Functionally, part of the Sec protein translocase complex. Interacts with the SecYEG preprotein conducting channel. Has a central role in coupling the hydrolysis of ATP to the transfer of proteins into and across the cell membrane, serving both as a receptor for the preprotein-SecB complex and as an ATP-driven molecular motor driving the stepwise translocation of polypeptide chains across the membrane. The sequence is that of Protein translocase subunit SecA from Xylella fastidiosa (strain 9a5c).